Here is a 471-residue protein sequence, read N- to C-terminus: Cysteine--tRNA ligase (471 aa).

Residue Cys29 participates in Zn(2+) binding. A 'HIGH' region motif is present at residues 31–41 (LTVQSEPHVGH). Zn(2+) contacts are provided by Cys215, His240, and Glu244. Residues 271-275 (KMSKS) carry the 'KMSKS' region motif. Lys274 contributes to the ATP binding site.

This sequence belongs to the class-I aminoacyl-tRNA synthetase family. As to quaternary structure, monomer. Requires Zn(2+) as cofactor.

The protein resides in the cytoplasm. The catalysed reaction is tRNA(Cys) + L-cysteine + ATP = L-cysteinyl-tRNA(Cys) + AMP + diphosphate. This chain is Cysteine--tRNA ligase, found in Nocardioides sp. (strain ATCC BAA-499 / JS614).